The following is a 160-amino-acid chain: MMIIIPNNEIAKHMLTDFFAKHWGTPEMAISSGIFRCDELDGFAAVNESGEIIGCITYTIDGKDCEIISLDSMIENKGIGTALLQQVEEKAKHAHCQRIKLITTNDNVNAIAFYQKRGYQFAAVFPNAVEKARRLKPEIPEVAENGILIRDEILFSKVID.

The N-acetyltransferase domain occupies 2-140 (MIIIPNNEIA…KARRLKPEIP (139 aa)).

This is an uncharacterized protein from Bacillus subtilis (strain 168).